Here is a 118-residue protein sequence, read N- to C-terminus: Ribosome-binding factor A (118 aa).

Belongs to the RbfA family. Monomer. Binds 30S ribosomal subunits, but not 50S ribosomal subunits or 70S ribosomes.

The protein resides in the cytoplasm. Its function is as follows. One of several proteins that assist in the late maturation steps of the functional core of the 30S ribosomal subunit. Associates with free 30S ribosomal subunits (but not with 30S subunits that are part of 70S ribosomes or polysomes). Required for efficient processing of 16S rRNA. May interact with the 5'-terminal helix region of 16S rRNA. This Dehalococcoides mccartyi (strain ATCC BAA-2266 / KCTC 15142 / 195) (Dehalococcoides ethenogenes (strain 195)) protein is Ribosome-binding factor A.